We begin with the raw amino-acid sequence, 271 residues long: Tryptophan synthase alpha chain (271 aa).

Residues Glu56 and Asp67 each act as proton acceptor in the active site.

It belongs to the TrpA family. As to quaternary structure, tetramer of two alpha and two beta chains.

It carries out the reaction (1S,2R)-1-C-(indol-3-yl)glycerol 3-phosphate + L-serine = D-glyceraldehyde 3-phosphate + L-tryptophan + H2O. It functions in the pathway amino-acid biosynthesis; L-tryptophan biosynthesis; L-tryptophan from chorismate: step 5/5. In terms of biological role, the alpha subunit is responsible for the aldol cleavage of indoleglycerol phosphate to indole and glyceraldehyde 3-phosphate. This Mycobacterium avium (strain 104) protein is Tryptophan synthase alpha chain.